The primary structure comprises 648 residues: Phosphomethylpyrimidine synthase (648 aa).

Substrate-binding positions include Asn-253, Met-282, Tyr-311, His-347, 367-369, 408-411, and Glu-447; these read SRG and DGLR. His-451 contributes to the Zn(2+) binding site. Tyr-474 contacts substrate. His-515 contributes to the Zn(2+) binding site. Positions 595, 598, and 603 each coordinate [4Fe-4S] cluster.

This sequence belongs to the ThiC family. Homodimer. Requires [4Fe-4S] cluster as cofactor.

It catalyses the reaction 5-amino-1-(5-phospho-beta-D-ribosyl)imidazole + S-adenosyl-L-methionine = 4-amino-2-methyl-5-(phosphooxymethyl)pyrimidine + CO + 5'-deoxyadenosine + formate + L-methionine + 3 H(+). Its pathway is cofactor biosynthesis; thiamine diphosphate biosynthesis. Functionally, catalyzes the synthesis of the hydroxymethylpyrimidine phosphate (HMP-P) moiety of thiamine from aminoimidazole ribotide (AIR) in a radical S-adenosyl-L-methionine (SAM)-dependent reaction. In Burkholderia thailandensis (strain ATCC 700388 / DSM 13276 / CCUG 48851 / CIP 106301 / E264), this protein is Phosphomethylpyrimidine synthase.